The primary structure comprises 356 residues: D-alanine--D-alanine ligase (356 aa).

One can recognise an ATP-grasp domain in the interval 134 to 339 (KQLFAHRGLP…YADLITKLIE (206 aa)). 167–222 (KDKLEFPVFVKPANLGSSVGISKCNNEEELKSGIEEAFQFDRKLVIEQGIEAREIE) provides a ligand contact to ATP. Residues D293, E306, and N308 each coordinate Mg(2+).

The protein belongs to the D-alanine--D-alanine ligase family. Mg(2+) serves as cofactor. The cofactor is Mn(2+).

Its subcellular location is the cytoplasm. It carries out the reaction 2 D-alanine + ATP = D-alanyl-D-alanine + ADP + phosphate + H(+). It functions in the pathway cell wall biogenesis; peptidoglycan biosynthesis. Functionally, cell wall formation. This is D-alanine--D-alanine ligase from Staphylococcus carnosus (strain TM300).